A 509-amino-acid polypeptide reads, in one-letter code: Pyruvate kinase (509 aa).

At S29 the chain carries Phosphoserine. A substrate-binding site is contributed by R56. N58 and S60 together coordinate K(+). Position 58–61 (58–61) interacts with ATP; that stretch reads NFSH. Residue S63 is modified to Phosphoserine. K(+)-binding residues include D91 and T92. ATP contacts are provided by R98 and K184. A Mg(2+)-binding site is contributed by E249. Positions 272 and 273 each coordinate substrate. A Mg(2+)-binding site is contributed by D273. S281 is subject to Phosphoserine. T305 is a binding site for substrate. S412 carries the phosphoserine modification.

This sequence belongs to the pyruvate kinase family. Homotetramer. The cofactor is Mg(2+). Requires K(+) as cofactor.

The enzyme catalyses pyruvate + ATP = phosphoenolpyruvate + ADP + H(+). It participates in carbohydrate degradation; glycolysis; pyruvate from D-glyceraldehyde 3-phosphate: step 5/5. The protein is Pyruvate kinase (pyk1) of Schizosaccharomyces pombe (strain 972 / ATCC 24843) (Fission yeast).